The sequence spans 312 residues: Ribosomal protein L11 methyltransferase (312 aa).

S-adenosyl-L-methionine-binding residues include Thr162, Gly183, Asp205, and Asn248.

The protein belongs to the methyltransferase superfamily. PrmA family.

The protein resides in the cytoplasm. The enzyme catalyses L-lysyl-[protein] + 3 S-adenosyl-L-methionine = N(6),N(6),N(6)-trimethyl-L-lysyl-[protein] + 3 S-adenosyl-L-homocysteine + 3 H(+). Functionally, methylates ribosomal protein L11. The sequence is that of Ribosomal protein L11 methyltransferase from Bacillus cereus (strain Q1).